Reading from the N-terminus, the 372-residue chain is tRNA-specific 2-thiouridylase MnmA (372 aa).

ATP is bound by residues 11 to 18 (GMSGGVDS) and Met-37. The tract at residues 97–99 (NPD) is interaction with target base in tRNA. Cys-102 functions as the Nucleophile in the catalytic mechanism. A disulfide bridge connects residues Cys-102 and Cys-199. Gly-126 serves as a coordination point for ATP. The tract at residues 149-151 (KDQ) is interaction with tRNA. Cys-199 acts as the Cysteine persulfide intermediate in catalysis. Residues 309–310 (RY) are interaction with tRNA.

It belongs to the MnmA/TRMU family.

Its subcellular location is the cytoplasm. The catalysed reaction is S-sulfanyl-L-cysteinyl-[protein] + uridine(34) in tRNA + AH2 + ATP = 2-thiouridine(34) in tRNA + L-cysteinyl-[protein] + A + AMP + diphosphate + H(+). In terms of biological role, catalyzes the 2-thiolation of uridine at the wobble position (U34) of tRNA, leading to the formation of s(2)U34. This Staphylococcus aureus (strain MSSA476) protein is tRNA-specific 2-thiouridylase MnmA.